Reading from the N-terminus, the 739-residue chain is Polyribonucleotide nucleotidyltransferase (739 aa).

Asp-488 and Asp-494 together coordinate Mg(2+). The 60-residue stretch at 555–614 (PKIVTLKINPDKIRDVIGPGGKVINGIIDETGVKIDIDQDGTVFIASTDQDGINHARQLI) folds into the KH domain. Residues 624-692 (GEEFDGTVRR…DKGRVNASHK (69 aa)) form the S1 motif domain. The segment at 698 to 739 (GMSPEDRAAYDEKKKTERDSRPPRRDTGSRPPRDGQRPPRRN) is disordered. Residues 701 to 739 (PEDRAAYDEKKKTERDSRPPRRDTGSRPPRDGQRPPRRN) are compositionally biased toward basic and acidic residues.

Belongs to the polyribonucleotide nucleotidyltransferase family. The cofactor is Mg(2+).

The protein resides in the cytoplasm. It carries out the reaction RNA(n+1) + phosphate = RNA(n) + a ribonucleoside 5'-diphosphate. Functionally, involved in mRNA degradation. Catalyzes the phosphorolysis of single-stranded polyribonucleotides processively in the 3'- to 5'-direction. The sequence is that of Polyribonucleotide nucleotidyltransferase from Exiguobacterium sibiricum (strain DSM 17290 / CCUG 55495 / CIP 109462 / JCM 13490 / 255-15).